A 503-amino-acid chain; its full sequence is 26S proteasome non-ATPase regulatory subunit 5 (503 aa).

At Ala-2 the chain carries N-acetylalanine.

This sequence belongs to the proteasome subunit S5B/HSM3 family. In terms of assembly, interacts with PSMC1, PSMC2, PSMD1 and PSMD6. Part of transient complex containing PSMD5, PSMC2, PSMC1 and PSMD2 formed during the assembly of the 26S proteasome.

Its function is as follows. Acts as a chaperone during the assembly of the 26S proteasome, specifically of the base subcomplex of the PA700/19S regulatory complex (RC). In the initial step of the base subcomplex assembly is part of an intermediate PSMD5:PSMC2:PSMC1:PSMD2 module which probably assembles with a PSMD10:PSMC4:PSMC5:PAAF1 module followed by dissociation of PSMD5. The protein is 26S proteasome non-ATPase regulatory subunit 5 (PSMD5) of Bos taurus (Bovine).